A 69-amino-acid polypeptide reads, in one-letter code: ATP synthase protein 8 (69 aa).

Residues 8-24 (TWTLTISLMIISLFCIY) form a helical membrane-spanning segment. N6-acetyllysine; alternate is present on K55. Position 55 is an N6-succinyllysine; alternate (K55). K58 carries the N6-acetyllysine modification.

Belongs to the ATPase protein 8 family. As to quaternary structure, F-type ATPases have 2 components, CF(1) - the catalytic core - and CF(0) - the membrane proton channel. Component of an ATP synthase complex composed of ATP5PB, ATP5MC1, ATP5F1E, ATP5PD, ATP5ME, ATP5PF, ATP5MF, MT-ATP6, MT-ATP8, ATP5F1A, ATP5F1B, ATP5F1D, ATP5F1C, ATP5PO, ATP5MG, ATP5MK and ATP5MJ. Interacts with PRICKLE3.

The protein localises to the mitochondrion membrane. Mitochondrial membrane ATP synthase (F(1)F(0) ATP synthase or Complex V) produces ATP from ADP in the presence of a proton gradient across the membrane which is generated by electron transport complexes of the respiratory chain. F-type ATPases consist of two structural domains, F(1) - containing the extramembraneous catalytic core and F(0) - containing the membrane proton channel, linked together by a central stalk and a peripheral stalk. During catalysis, ATP synthesis in the catalytic domain of F(1) is coupled via a rotary mechanism of the central stalk subunits to proton translocation. Part of the complex F(0) domain. Minor subunit located with subunit a in the membrane. This is ATP synthase protein 8 (MT-ATP8) from Didelphis virginiana (North American opossum).